Consider the following 511-residue polypeptide: Putative thymidine phosphorylase 1 (511 aa).

This sequence belongs to the thymidine/pyrimidine-nucleoside phosphorylase family. Type 2 subfamily.

It carries out the reaction thymidine + phosphate = 2-deoxy-alpha-D-ribose 1-phosphate + thymine. The sequence is that of Putative thymidine phosphorylase 1 from Acidovorax sp. (strain JS42).